We begin with the raw amino-acid sequence, 170 residues long: 3-isopropylmalate dehydratase small subunit 1 (170 aa).

The protein belongs to the LeuD family. LeuD type 2 subfamily. As to quaternary structure, heterodimer of LeuC and LeuD.

It carries out the reaction (2R,3S)-3-isopropylmalate = (2S)-2-isopropylmalate. It participates in amino-acid biosynthesis; L-leucine biosynthesis; L-leucine from 3-methyl-2-oxobutanoate: step 2/4. Its function is as follows. Catalyzes the isomerization between 2-isopropylmalate and 3-isopropylmalate, via the formation of 2-isopropylmaleate. The protein is 3-isopropylmalate dehydratase small subunit 1 (leuD1) of Methanopyrus kandleri (strain AV19 / DSM 6324 / JCM 9639 / NBRC 100938).